Here is a 224-residue protein sequence, read N- to C-terminus: uncharacterized protein (224 aa).

Residues 108–137 (QLALDRAELNESIRATNENLALQYSKLQTE) adopt a coiled-coil conformation.

This is an uncharacterized protein from Human picobirnavirus (strain Human/Thailand/Hy005102/-) (PBV).